Consider the following 540-residue polypeptide: uncharacterized protein (540 aa).

Residues 1 to 61 (MFSIFKKKTS…TNDSPWQDPT (61 aa)) are Cytoplasmic-facing. A helical transmembrane segment spans residues 62–82 (YFSSFGKELMFIATCMLAQLL). Residues 83–108 (NQAGQTHALCIMNVLSKSFNSEANNQ) lie on the Extracellular side of the membrane. A helical transmembrane segment spans residues 109–129 (AWLMASFPLAAGSFILISGRL). At 130–131 (GD) the chain is on the cytoplasmic side. A helical membrane pass occupies residues 132–152 (IYGLKKMLIVGYVIVIVWSII). Residues 153–169 (SGLSKYSNSDAFFITSR) lie on the Extracellular side of the membrane. A helical membrane pass occupies residues 170–190 (AFQGVGIAFILPNIMGLVGHV). Over 191–203 (YKVGSFRKNIVIS) the chain is Cytoplasmic. Residues 204–224 (FIGACAPTGGMFGGLFGGLIV) traverse the membrane as a helical segment. The Extracellular segment spans residues 225-232 (TEDPNQWP). A helical transmembrane segment spans residues 233 to 253 (WVFYAFGIATFLSLLMAWYSI). The Cytoplasmic portion of the chain corresponds to 254 to 272 (PNNVPTNIHGLSMDWTGSA). A helical membrane pass occupies residues 273–293 (LAIIGLILFNFVWNQAPIVGW). The Extracellular segment spans residues 294–295 (DK). Residues 296–316 (PYIIVLLIISVIFLVAFFVYE) form a helical membrane-spanning segment. Over 317-334 (SKYAEVPLLPRAMTKNRH) the chain is Cytoplasmic. A helical transmembrane segment spans residues 335 to 355 (MIMILLAVFLGWGSFGIWTFY). Topologically, residues 356–372 (YVSFQLNLRHYSPVWTG) are extracellular. A helical transmembrane segment spans residues 373–393 (GTYFVFVIFGSMAAFFVAFSI). The Cytoplasmic segment spans residues 394 to 398 (KRLGP). The helical transmembrane segment at 399 to 419 (ALLLCFSLMAFDAGSIMFSVL) threads the bilayer. The Extracellular segment spans residues 420–429 (PVEQSYWKLN). The helical transmembrane segment at 430-450 (FAMQAILCFGMDLSFPASSII) threads the bilayer. The Cytoplasmic portion of the chain corresponds to 451 to 461 (LSDGLPMQYQG). Residues 462–482 (MAGSLVNTVINYSASLCLGMG) form a helical membrane-spanning segment. At 483-502 (GTVEHQINKSGNDLLKGYRA) the chain is on the extracellular side. Residues 503-523 (AVYLGVGLASLGVVISVTYML) traverse the membrane as a helical segment. At 524-540 (ENLWNRHRKSEDRSLEA) the chain is on the cytoplasmic side.

The protein belongs to the major facilitator superfamily.

The protein resides in the membrane. This is an uncharacterized protein from Saccharomyces cerevisiae (strain ATCC 204508 / S288c) (Baker's yeast).